A 1141-amino-acid polypeptide reads, in one-letter code: Serine-aspartate repeat-containing protein E (1141 aa).

An N-terminal signal peptide occupies residues 1–52 (MINRDNKKAITKKGMISNRLNKFSIRKYTVGTASILVGTTLIFGLGNQEAKA). Positions 23 to 34 (FSIRKYTVGTAS) match the YSIRK-G/S signaling motif motif. The segment at 53-601 (AENTSTENAK…GDGTVKPEEK (549 aa)) is ligand binding A region. The interval 54-225 (ENTSTENAKQ…SKEELKNNPE (172 aa)) is disordered. Residues 61–75 (AKQDDATTSDNKEVV) show a composition bias toward basic and acidic residues. Over residues 77–90 (EAENNSTTENDSTN) the composition is skewed to low complexity. Residues 92–109 (IKKETNTDSQPEAKEEST) show a composition bias toward basic and acidic residues. The segment covering 110 to 126 (KSSTQQQQNNVTATTET) has biased composition (low complexity). The span at 130–145 (NIEKENVKPSTDKTAT) shows a compositional bias: basic and acidic residues. A compositionally biased stretch (polar residues) spans 158–207 (PNNTNNDVTTKPSTSEIQTKPTTPQESTNIENSQPQPTPSKVDNQVTDAT). The segment covering 216-225 (SKEELKNNPE) has biased composition (basic and acidic residues). CNA-B domains lie at 602–714 (LYKI…YKEP), 715–824 (KYNL…YKTP), and 825–935 (KYSL…EEDT). The interval 899–1117 (VTNTTEDDKD…GSENNGSNNA (219 aa)) is disordered. Acidic residues-rich tracts occupy residues 903–913 (TEDDKDADGGE) and 930–1080 (YFEE…DSDS). Residues 1104–1108 (LPETG) carry the LPXTG sorting signal motif. T1107 bears the Pentaglycyl murein peptidoglycan amidated threonine mark. The propeptide at 1108–1141 (GSENNGSNNATLFGGLFAALGSLLLFGRRKKQNK) is removed by sortase.

This sequence belongs to the serine-aspartate repeat-containing protein (SDr) family. As to quaternary structure, interacts with host complement factor H/CFAH (via C-terminus). Interacts with host complement regulator C4BPA.

The protein localises to the secreted. The protein resides in the cell wall. Cell surface-associated calcium-binding protein which plays an important role in adhesion and pathogenesis. Contributes to the resistance to killing by innate immune components in blood and thus attenuates bacterial clearance by interacting with host complement factor H/CFAH and modulating its activity. Also inhibits bacterial opsonization and killing by interacting with host complement regulator C4BPA and thus inhibiting classical complement pathway activation. The protein is Serine-aspartate repeat-containing protein E (sdrE) of Staphylococcus aureus (strain MSSA476).